A 137-amino-acid chain; its full sequence is Large ribosomal subunit protein uL16 (137 aa).

The protein belongs to the universal ribosomal protein uL16 family. In terms of assembly, part of the 50S ribosomal subunit.

Its function is as follows. Binds 23S rRNA and is also seen to make contacts with the A and possibly P site tRNAs. The sequence is that of Large ribosomal subunit protein uL16 from Bartonella henselae (strain ATCC 49882 / DSM 28221 / CCUG 30454 / Houston 1) (Rochalimaea henselae).